Reading from the N-terminus, the 909-residue chain is Glucan endo-1,3-beta-D-glucosidase ARB_01444 (909 aa).

An N-terminal signal peptide occupies residues 1-23; that stretch reads MKPYTTLPGVAVLVSLLTQSAHA. The tract at residues 136 to 187 is disordered; it reads KRSPAPQRHPPAPTKATAGYQFTNCTSTSNPGPTATSPTSGIPSQPSAPPAT. Positions 155–180 are enriched in polar residues; it reads YQFTNCTSTSNPGPTATSPTSGIPSQ. 3 N-linked (GlcNAc...) asparagine glycosylation sites follow: N159, N239, and N259. The tract at residues 191-430 is beta-sandwich subdomain; sequence QDIFQPIAKD…KGVIQVAKNP (240 aa). Positions 191-909 constitute a GH81 domain; sequence QDIFQPIAKD…AGEYSTYIAL (719 aa). The segment at 431 to 524 is alpha/beta subdomain; it reads SAEEGEGIYD…GDSWTMVEGN (94 aa). The (alpha/beta)6 barrel subdomain stretch occupies residues 539–909; the sequence is SSQVTLSEGA…AGEYSTYIAL (371 aa). The active site involves D654. 4 residues coordinate (1,3-beta-D-glucosyl)n: H658, D727, E729, and E733. Active-site residues include E729 and E733. Residues 798 to 800 form a may provide specificity for triple-helical beta-glucan region; that stretch reads KID. Y811 serves as a coordination point for (1,3-beta-D-glucosyl)n.

It belongs to the glycosyl hydrolase 81 family.

The protein resides in the secreted. The protein localises to the cell wall. It carries out the reaction Hydrolysis of (1-&gt;3)-beta-D-glucosidic linkages in (1-&gt;3)-beta-D-glucans.. In terms of biological role, cleaves internal linkages in 1,3-beta-glucan. Probably involved in cell separation after cytokinesis. This is Glucan endo-1,3-beta-D-glucosidase ARB_01444 from Arthroderma benhamiae (strain ATCC MYA-4681 / CBS 112371) (Trichophyton mentagrophytes).